Here is a 504-residue protein sequence, read N- to C-terminus: Maturase K (504 aa).

It belongs to the intron maturase 2 family. MatK subfamily.

The protein localises to the plastid. The protein resides in the chloroplast. Its function is as follows. Usually encoded in the trnK tRNA gene intron. Probably assists in splicing its own and other chloroplast group II introns. The chain is Maturase K from Olimarabidopsis pumila (Dwarf rocket).